A 233-amino-acid polypeptide reads, in one-letter code: Small heat shock protein hspF (233 aa).

In terms of domain architecture, sHSP spans 129 to 233; that stretch reads IPLFTFFEPL…ILLITVNKFL (105 aa).

Belongs to the small heat shock protein (HSP20) family.

The chain is Small heat shock protein hspF (hspF-1) from Dictyostelium discoideum (Social amoeba).